A 131-amino-acid chain; its full sequence is Glycine cleavage system H protein (131 aa).

Residues 24-106 enclose the Lipoyl-binding domain; sequence RVTVGISDHA…YGEGWIFVVE (83 aa). K65 is modified (N6-lipoyllysine).

It belongs to the GcvH family. As to quaternary structure, the glycine cleavage system is composed of four proteins: P, T, L and H. (R)-lipoate is required as a cofactor.

Its function is as follows. The glycine cleavage system catalyzes the degradation of glycine. The H protein shuttles the methylamine group of glycine from the P protein to the T protein. The chain is Glycine cleavage system H protein from Xanthomonas campestris pv. campestris (strain 8004).